Here is a 481-residue protein sequence, read N- to C-terminus: Acetyltransferase peniE (481 aa).

Residues H164 and D411 each act as proton acceptor in the active site.

It belongs to the plant acyltransferase family. In terms of assembly, monomer.

Acetyltransferase; part of the gene cluster that mediates the biosynthesis of penifulvin A, a potent insecticidal sesquiterpene that features a [5.5.5.6]dioxafenestrane ring. The first step of the pathway is performed by the sesquiterpene cyclase peniA that generates the angular triquinane scaffold silphinene via cyclization of the linear farnesyl pyrophosphate (FPP). The cytochrome P450 monooxygenase peniB and the flavin-dependent monooxygenase peniC then catalyze a series of oxidation reactions to transform silphinene into penifulvin A. The dioxygenases peniD and peniF, as well as the acetyltransferase peniE, do not seem to be involved in the biosynthesis of penifulvin A. This chain is Acetyltransferase peniE, found in Penicillium patulum (Penicillium griseofulvum).